The sequence spans 339 residues: Ketol-acid reductoisomerase (NADP(+)) (339 aa).

A KARI N-terminal Rossmann domain is found at Met1–Thr182. Residues Tyr24–Gln27, Arg48, Ser51, and Asp83–Gln86 contribute to the NADP(+) site. His108 is a catalytic residue. Gly134 contacts NADP(+). One can recognise a KARI C-terminal knotted domain in the interval Thr183 to Ile328. Asp191, Glu195, Glu227, and Glu231 together coordinate Mg(2+). Ser252 contributes to the substrate binding site.

Belongs to the ketol-acid reductoisomerase family. Mg(2+) is required as a cofactor.

The catalysed reaction is (2R)-2,3-dihydroxy-3-methylbutanoate + NADP(+) = (2S)-2-acetolactate + NADPH + H(+). It catalyses the reaction (2R,3R)-2,3-dihydroxy-3-methylpentanoate + NADP(+) = (S)-2-ethyl-2-hydroxy-3-oxobutanoate + NADPH + H(+). It participates in amino-acid biosynthesis; L-isoleucine biosynthesis; L-isoleucine from 2-oxobutanoate: step 2/4. The protein operates within amino-acid biosynthesis; L-valine biosynthesis; L-valine from pyruvate: step 2/4. Functionally, involved in the biosynthesis of branched-chain amino acids (BCAA). Catalyzes an alkyl-migration followed by a ketol-acid reduction of (S)-2-acetolactate (S2AL) to yield (R)-2,3-dihydroxy-isovalerate. In the isomerase reaction, S2AL is rearranged via a Mg-dependent methyl migration to produce 3-hydroxy-3-methyl-2-ketobutyrate (HMKB). In the reductase reaction, this 2-ketoacid undergoes a metal-dependent reduction by NADPH to yield (R)-2,3-dihydroxy-isovalerate. The protein is Ketol-acid reductoisomerase (NADP(+)) of Gluconobacter oxydans (strain 621H) (Gluconobacter suboxydans).